The primary structure comprises 216 residues: Purine nucleoside phosphorylase DeoD-type (216 aa).

Phosphate is bound by residues Arg-4, Arg-23, and 67–70 (RVGT). A purine D-ribonucleoside-binding positions include 159–161 (EME) and 183–184 (SD). Residue Asp-184 is the Proton donor of the active site.

It belongs to the PNP/UDP phosphorylase family. As to quaternary structure, homohexamer; trimer of homodimers.

It catalyses the reaction a purine D-ribonucleoside + phosphate = a purine nucleobase + alpha-D-ribose 1-phosphate. The enzyme catalyses a purine 2'-deoxy-D-ribonucleoside + phosphate = a purine nucleobase + 2-deoxy-alpha-D-ribose 1-phosphate. Its function is as follows. Catalyzes the reversible phosphorolytic breakdown of the N-glycosidic bond in the beta-(deoxy)ribonucleoside molecules, with the formation of the corresponding free purine bases and pentose-1-phosphate. The polypeptide is Purine nucleoside phosphorylase DeoD-type (Streptococcus thermophilus).